Here is a 1742-residue protein sequence, read N- to C-terminus: Unconventional myosin-Vc (1742 aa).

The residue at position 2 (Ala-2) is an N-acetylalanine. The Myosin N-terminal SH3-like domain occupies 8-62 (TQYNRVWIPDPEEVWKSAEIAKDYRVGDKVLRLLLEDGTELDYSVNPESLPPLRN). Residues 67 to 753 (VGENDLTALS…QVAYLEKLRL (687 aa)) form the Myosin motor domain. Residue 161–168 (GESGAGKT) coordinates ATP. Positions 632–654 (LYLLMETLNATTPHYVRCIKPND) are actin-binding. IQ domains lie at 756–779 (LRQS…FLRE), 780–806 (RRAA…VALK), 807–829 (EAWA…LYQL), 830–854 (IRMA…RKML), and 855–884 (EEHK…FVLN). Positions 884–1351 (NIQLTYRVQR…SKTIGKANDV (468 aa)) form a coiled coil. Positions 1421–1697 (NSTINGIKQV…VRKVQALLNS (277 aa)) constitute a Dilute domain.

This sequence belongs to the TRAFAC class myosin-kinesin ATPase superfamily. Myosin family. Expressed chiefly in non-neuronal tissues. Particularly abundant in epithelial and glandular tissues including pancreas, prostate, mammary, stomach, colon and lung.

Its function is as follows. May be involved in transferrin trafficking. Likely to power actin-based membrane trafficking in many physiologically crucial tissues. The sequence is that of Unconventional myosin-Vc (MYO5C) from Homo sapiens (Human).